The following is a 128-amino-acid chain: Ribonuclease P protein component (128 aa).

This sequence belongs to the RnpA family. As to quaternary structure, consists of a catalytic RNA component (M1 or rnpB) and a protein subunit.

It carries out the reaction Endonucleolytic cleavage of RNA, removing 5'-extranucleotides from tRNA precursor.. RNaseP catalyzes the removal of the 5'-leader sequence from pre-tRNA to produce the mature 5'-terminus. It can also cleave other RNA substrates such as 4.5S RNA. The protein component plays an auxiliary but essential role in vivo by binding to the 5'-leader sequence and broadening the substrate specificity of the ribozyme. In Parasynechococcus marenigrum (strain WH8102), this protein is Ribonuclease P protein component.